The sequence spans 324 residues: Reaction center protein M chain (324 aa).

Topologically, residues 2-51 (ADYQTIYTQIQARGPHITVSGEWGDNDRVGKPFYSYWLGKIGDAQIGPIY) are cytoplasmic. A helical transmembrane segment spans residues 52–76 (LGASGIAAFAFGSTAILIILFNMAA). The Periplasmic segment spans residues 77–110 (EVHFDPLQFFRQFFWLGLYPPKAQYGMGIPPLHD). Residues 111 to 137 (GGWWLMAGLFMTLSLGSWWIRVYSRAR) traverse the membrane as a helical segment. The Cytoplasmic segment spans residues 138 to 142 (ALGLG). A helical membrane pass occupies residues 143–166 (THIAWNFAAAIFFVLCIGCIHPTL). The Periplasmic portion of the chain corresponds to 167 to 197 (VGSWSEGVPFGIWPHIDWLTAFSIRYGNFYY). Positions 181 and 201 each coordinate (7R,8Z)-bacteriochlorophyll b. Residues 198-223 (CPWHGFSIGFAYGCGLLFAAHGATIL) form a helical membrane-spanning segment. Positions 218 and 233 each coordinate Fe cation. At 224 to 259 (AVARFGGDREIEQITDRGTAVERAALFWRWTIGFNA) the chain is on the cytoplasmic side. Tryptophan 251 is a binding site for a ubiquinone. Residues 260–284 (TIESVHRWGWFFSLMVMVSASVGIL) form a helical membrane-spanning segment. Residue histidine 265 participates in Fe cation binding. Residues 285 to 324 (LTGTFVDNWYLWCVKHGAAPDYPAYLPATPDPASLPGAPK) lie on the Periplasmic side of the membrane.

It belongs to the reaction center PufL/M/PsbA/D family. In terms of assembly, reaction center is composed of four bacteriochlorophylls, two bacteriopheophytins, two ubiquinones, one iron, and three highly hydrophobic polypeptide chains (designated L, M, and H).

It is found in the cellular chromatophore membrane. Its function is as follows. The reaction center is a membrane-bound complex that mediates the initial photochemical event in the electron transfer process of photosynthesis. The sequence is that of Reaction center protein M chain (pufM) from Blastochloris viridis (Rhodopseudomonas viridis).